A 514-amino-acid polypeptide reads, in one-letter code: Putative ribose/galactose/methyl galactoside import ATP-binding protein 3 (514 aa).

ABC transporter domains are found at residues 21 to 256 and 267 to 512; these read LRLD…VGRT and VPTD…SGRS. 53 to 60 is an ATP binding site; the sequence is GENGAGKS.

The protein belongs to the ABC transporter superfamily. Carbohydrate importer 2 (CUT2) (TC 3.A.1.2) family.

It is found in the cell inner membrane. It catalyses the reaction D-ribose(out) + ATP + H2O = D-ribose(in) + ADP + phosphate + H(+). It carries out the reaction D-galactose(out) + ATP + H2O = D-galactose(in) + ADP + phosphate + H(+). In terms of biological role, part of an ABC transporter complex involved in carbohydrate import. Could be involved in ribose, galactose and/or methyl galactoside import. Responsible for energy coupling to the transport system. This Burkholderia cenocepacia (strain HI2424) protein is Putative ribose/galactose/methyl galactoside import ATP-binding protein 3.